The following is a 215-amino-acid chain: UPF0502 protein PP_2442 (215 aa).

It belongs to the UPF0502 family.

The polypeptide is UPF0502 protein PP_2442 (Pseudomonas putida (strain ATCC 47054 / DSM 6125 / CFBP 8728 / NCIMB 11950 / KT2440)).